We begin with the raw amino-acid sequence, 229 residues long: UPF0758 protein Fjoh_0413 (229 aa).

The 123-residue stretch at 107 to 229 (KITSSKDAFT…YYSFVDEGIF (123 aa)) folds into the MPN domain. Positions 178, 180, and 191 each coordinate Zn(2+). The JAMM motif signature appears at 178-191 (HNHPSGELNPSQAD).

Belongs to the UPF0758 family.

The chain is UPF0758 protein Fjoh_0413 from Flavobacterium johnsoniae (strain ATCC 17061 / DSM 2064 / JCM 8514 / BCRC 14874 / CCUG 350202 / NBRC 14942 / NCIMB 11054 / UW101) (Cytophaga johnsonae).